Consider the following 511-residue polypeptide: Arginine-containing cyclodipeptide synthase eshA (511 aa).

Positions 413–417 (DDSAE) match the Conserved DDXXE motif motif.

Belongs to the arginine-containing cyclodipeptide synthase family.

It catalyses the reaction L-arginyl-tRNA(Arg) + L-leucyl-tRNA(Leu) = cyclo(L-arginyl-L-leucyl) + tRNA(Arg) + tRNA(Leu) + 2 H(+). It functions in the pathway secondary metabolite biosynthesis. Functionally, arginine-containing cyclodipeptide synthase; part of the cluster that mediates the biosynthesis of a highly modified cyclo-arginine-leucine dipeptide (cRW). Within the pathway, eshA acts as the scaffold-generating enzyme and is responsible for formation of the cyclo-Arg-Leu diketopiperazine (cRL) from L-arginyl-tRNA(Arg) + L-Leucyl-tRNA(Leu). Additional enzymes from the cluster then further modify the cyclo-Arg-Leu diketopiperazine (cRW) scaffold. The protein is Arginine-containing cyclodipeptide synthase eshA of Penicillium shearii (Eupenicillium shearii).